The chain runs to 570 residues: Serine/threonine-protein kinase Pink1, mitochondrial (570 aa).

Residues 1 to 5 (MSVRA) constitute a mitochondrion transit peptide. At 6–96 (VGSRLFKHGR…AELRKKATRR (91 aa)) the chain is on the mitochondrial intermembrane side. A helical transmembrane segment spans residues 97–120 (ILFGDSAPFFALVGVSIASGTGIL). Over 121 to 570 (TKEEELEGVC…WIQENLPELD (450 aa)) the chain is Cytoplasmic. One can recognise a Protein kinase domain in the interval 162-484 (LSLGKPIAKG…VAANVCQLFL (323 aa)). Lys196 contributes to the ATP binding site. A Phosphoserine; by autocatalysis modification is found at Ser205. Glu217 is a binding site for Mg(2+). ATP is bound by residues Lys295, Tyr297, and Asn300. Residue Asp337 is the Proton acceptor of the active site. Asp341 serves as a coordination point for ATP. Mg(2+)-binding residues include Asn342 and Asp359. Asp359 lines the ATP pocket. The residue at position 377 (Ser377) is a Phosphoserine; by autocatalysis. A Phosphothreonine; by autocatalysis modification is found at Thr386. Thr530 is subject to Phosphothreonine.

This sequence belongs to the protein kinase superfamily. Ser/Thr protein kinase family. Mg(2+) serves as cofactor. In terms of processing, proteolytically cleaved. In healthy cells, the precursor is continuously imported into mitochondria where it is proteolytically cleaved into its short form by the mitochondrial rhomboid protease rho-7 (TcasGA2_TC013516). The short form is then released into the cytosol where it rapidly undergoes proteasome-dependent degradation. In unhealthy cells, when cellular stress conditions lead to the loss of mitochondrial membrane potential, mitochondrial import is impaired leading to the precursor accumulating on the outer mitochondrial membrane (OMM). Autophosphorylated on Ser-205, which activates kinase activity and is required for substrate recognition. Loss of mitochondrial membrane potential results in the precursor accumulating on the outer mitochondrial membrane (OMM) where it is activated by autophosphorylation at Ser-205. Autophosphorylation is sufficient and essential for selective recruitment of park to depolarized mitochondria, likely via Pink1-dependent phosphorylation of polyubiquitin chains. Also autophosphorylated at Ser-377, Thr-386 and possibly Thr-530. Another report found evidence of autophosphorylation at Ser-154, Thr-186, Thr-218, Ser-267 and Thr-530, as well as a number of other minor sites, but determined that phosphorylation at these sites is not required for enzyme activity and may not occur in vivo.

The protein resides in the mitochondrion outer membrane. The protein localises to the mitochondrion inner membrane. It is found in the cytoplasm. Its subcellular location is the cytosol. The catalysed reaction is L-seryl-[protein] + ATP = O-phospho-L-seryl-[protein] + ADP + H(+). The enzyme catalyses L-threonyl-[protein] + ATP = O-phospho-L-threonyl-[protein] + ADP + H(+). Its function is as follows. Acts as a serine/threonine-protein kinase. Exhibits a substrate preference for proline at position P+1 and a general preference at several residues for basic residues such as arginine. Also exhibits moderate preferences for a phosphotyrosine at position P-3 and a tryptophan at P-5. Critical to mitochondrial homeostasis it mediates several pathways that maintain mitochondrial health and function. Protects against mitochondrial dysfunction during cellular stress by phosphorylating mitochondrial proteins such as park and likely Drp1, to coordinate mitochondrial quality control mechanisms that remove and replace dysfunctional mitochondrial components. Depending on the severity of mitochondrial damage and/or dysfunction, activity ranges from preventing apoptosis and stimulating mitochondrial biogenesis to regulating mitochondrial dynamics and eliminating severely damaged mitochondria via mitophagy. Appears to be particularly important in maintaining the physiology and function of cells with high energy demands that are undergoing stress or altered metabolic environment, including spermatids, muscle cells and neurons such as the dopaminergic (DA) neurons. Mediates the translocation and activation of park at the outer membrane (OMM) of dysfunctional/depolarized mitochondria. At the OMM of damaged mitochondria, phosphorylates pre-existing polyubiquitin chains, the Pink1-phosphorylated polyubiquitin then recruits park from the cytosol to the OMM where park is fully activated by phosphorylation at 'Ser-80' by Pink1. When cellular stress results in irreversible mitochondrial damage, functions with park to promote the clearance of dysfunctional and/or depolarized mitochondria by selective autophagy (mitophagy). The Pink1-park pathway also promotes fission and/or inhibits fusion of damaged mitochondria, by phosphorylating and thus promoting the park-dependent degradation of proteins involved in mitochondrial fusion/fission such as Marf, Opa1 and fzo. This prevents the refusion of unhealthy mitochondria with the mitochondrial network or initiates mitochondrial fragmentation facilitating their later engulfment by autophagosomes. Also likely to promote mitochondrial fission independently of park and Atg7-mediated mitophagy, via the phosphorylation and activation of Drp1. Regulates motility of damaged mitochondria by phosphorylating Miro which likely promotes its park-dependent degradation by the proteasome; in motor neurons, this inhibits mitochondrial intracellular anterograde transport along the axons which probably increases the chance of the mitochondria being eliminated in the soma. The Pink1-park pathway is also involved in mitochondrial regeneration processes such as promoting mitochondrial biogenesis, activating localized mitochondrial repair, promoting selective turnover of mitochondrial proteins and initiating the mitochondrial import of endogenous proteins. Involved in mitochondrial biogenesis by promoting the park-dependent ubiquitination of transcriptional repressor Paris which leads to its subsequent proteasomal degradation and allows activation of the transcription factor srl. Functions with park to promote localized mitochondrial repair by activating the translation of specific nuclear-encoded mitochondrial RNAs (nc-mtRNAs) on the mitochondrial surface, including several key electron transport chain component nc-mtRNAs. During oogenesis, phosphorylates and inactivates larp on the membrane of defective mitochondria, thus impairing local translation and mtDNA replication and consequently, reducing transmission of deleterious mtDNA mutations to the mature oocyte. Phosphorylates the mitochondrial acyl-CoA dehydrogenase Mcad, and appears to be important for maintaining fatty acid and amino acid metabolism via a mechanism that is independent of it's role in maintaining production of ATP. The protein is Serine/threonine-protein kinase Pink1, mitochondrial of Tribolium castaneum (Red flour beetle).